The primary structure comprises 372 residues: Fatty acid 2-hydroxylase (372 aa).

The Cytochrome b5 heme-binding domain maps to 8-86 (AASFTSAEVQ…LEQYYVGELR (79 aa)). Residues His-43 and His-69 each coordinate heme. Transmembrane regions (helical) follow at residues 168–188 (VWYS…WSYY) and 213–233 (SVFI…EYLI). Residues 219-361 (FVLGMLIWTL…TKLWDYFFHT (143 aa)) form the Fatty acid hydroxylase domain. His-234, His-239, His-257, His-260, and His-261 together coordinate Zn(2+). A run of 2 helical transmembrane segments spans residues 268 to 288 (SRLV…YVFL) and 290 to 310 (LILP…GYVL). Residues His-315, His-319, His-336, His-339, and His-340 each coordinate Zn(2+).

The protein belongs to the sterol desaturase family. SCS7 subfamily. Zn(2+) serves as cofactor. As to expression, detected in oligodendrocytes (at protein level). Detected in sciatic nerve.

The protein localises to the endoplasmic reticulum membrane. It is found in the microsome membrane. The enzyme catalyses a 1,2-saturated fatty acid + 2 Fe(II)-[cytochrome b5] + O2 + 2 H(+) = a (R)-2-hydroxy fatty acid + 2 Fe(III)-[cytochrome b5] + H2O. It catalyses the reaction hexadecanoate + 2 Fe(II)-[cytochrome b5] + O2 + 2 H(+) = (R)-2-hydroxyhexadecanoate + 2 Fe(III)-[cytochrome b5] + H2O. The catalysed reaction is octadecanoate + 2 Fe(II)-[cytochrome b5] + O2 + 2 H(+) = (R)-2-hydroxyoctadecanoate + 2 Fe(III)-[cytochrome b5] + H2O. It carries out the reaction docosanoate + 2 Fe(II)-[cytochrome b5] + O2 + 2 H(+) = 2-hydroxydocosanoate + 2 Fe(III)-[cytochrome b5] + H2O. The enzyme catalyses tetracosanoate + 2 Fe(II)-[cytochrome b5] + O2 + 2 H(+) = (R)-2-hydroxytetracosanoate + 2 Fe(III)-[cytochrome b5] + H2O. It functions in the pathway lipid metabolism; fatty acid metabolism. The protein operates within sphingolipid metabolism; galactosylceramide biosynthesis. Catalyzes the hydroxylation of free fatty acids at the C-2 position to produce 2-hydroxy fatty acids, which are building blocks of sphingolipids and glycosphingolipids common in neural tissue and epidermis. FA2H is stereospecific for the production of (R)-2-hydroxy fatty acids. Plays an essential role in the synthesis of galactosphingolipids of the myelin sheath. Responsible for the synthesis of sphingolipids and glycosphingolipids involved in the formation of epidermal lamellar bodies critical for skin permeability barrier. Participates in the synthesis of glycosphingolipids and a fraction of type II wax diesters in sebaceous gland, specifically regulating hair follicle homeostasis. Involved in the synthesis of sphingolipids of plasma membrane rafts, controlling lipid raft mobility and trafficking of raft-associated proteins. This Rattus norvegicus (Rat) protein is Fatty acid 2-hydroxylase.